The primary structure comprises 518 residues: Chromosomal replication initiator protein DnaA (518 aa).

Positions 1 to 76 (METDGGDFPS…RALSEAYGSP (76 aa)) are domain I, interacts with DnaA modulators. Residues 76–176 (PIRLAVTVDP…RRPTTRIENS (101 aa)) are domain II. The interval 91–174 (LTPERTGEHS…QPRRPTTRIE (84 aa)) is disordered. A compositionally biased stretch (basic and acidic residues) spans 124–135 (DGLHLDERRSGS). The segment covering 136–147 (LEEDSPLDDSDP) has biased composition (acidic residues). The interval 177–393 (RLNPKYIFET…GALIRVTAFA (217 aa)) is domain III, AAA+ region. Residues Gly221, Gly223, Lys224, and Thr225 each coordinate ATP. The domain IV, binds dsDNA stretch occupies residues 394 to 518 (SLNRQPVDMQ…TNRIKKQSGA (125 aa)).

This sequence belongs to the DnaA family. In terms of assembly, oligomerizes as a right-handed, spiral filament on DNA at oriC.

The protein localises to the cytoplasm. Functionally, plays an essential role in the initiation and regulation of chromosomal replication. ATP-DnaA binds to the origin of replication (oriC) to initiate formation of the DNA replication initiation complex once per cell cycle. Binds the DnaA box (a 9 base pair repeat at the origin) and separates the double-stranded (ds)DNA. Forms a right-handed helical filament on oriC DNA; dsDNA binds to the exterior of the filament while single-stranded (ss)DNA is stabiized in the filament's interior. The ATP-DnaA-oriC complex binds and stabilizes one strand of the AT-rich DNA unwinding element (DUE), permitting loading of DNA polymerase. After initiation quickly degrades to an ADP-DnaA complex that is not apt for DNA replication. Binds acidic phospholipids. The polypeptide is Chromosomal replication initiator protein DnaA (Kineococcus radiotolerans (strain ATCC BAA-149 / DSM 14245 / SRS30216)).